Here is a 405-residue protein sequence, read N- to C-terminus: S-adenosylmethionine synthase (405 aa).

Position 139-144 (139-144 (GQGSVD)) interacts with ATP.

This sequence belongs to the AdoMet synthase 2 family. Mg(2+) serves as cofactor.

The catalysed reaction is L-methionine + ATP + H2O = S-adenosyl-L-methionine + phosphate + diphosphate. The protein operates within amino-acid biosynthesis; S-adenosyl-L-methionine biosynthesis; S-adenosyl-L-methionine from L-methionine: step 1/1. Its function is as follows. Catalyzes the formation of S-adenosylmethionine from methionine and ATP. This Thermococcus onnurineus (strain NA1) protein is S-adenosylmethionine synthase.